The following is a 285-amino-acid chain: Bifunctional protein FolD (285 aa).

NADP(+) is bound by residues 163–165 (GRS), Ser-188, and Ala-231.

It belongs to the tetrahydrofolate dehydrogenase/cyclohydrolase family. Homodimer.

The enzyme catalyses (6R)-5,10-methylene-5,6,7,8-tetrahydrofolate + NADP(+) = (6R)-5,10-methenyltetrahydrofolate + NADPH. It carries out the reaction (6R)-5,10-methenyltetrahydrofolate + H2O = (6R)-10-formyltetrahydrofolate + H(+). It participates in one-carbon metabolism; tetrahydrofolate interconversion. In terms of biological role, catalyzes the oxidation of 5,10-methylenetetrahydrofolate to 5,10-methenyltetrahydrofolate and then the hydrolysis of 5,10-methenyltetrahydrofolate to 10-formyltetrahydrofolate. This Oenococcus oeni (strain ATCC BAA-331 / PSU-1) protein is Bifunctional protein FolD.